The sequence spans 168 residues: NADH-ubiquinone oxidoreductase chain 6 (168 aa).

Transmembrane regions (helical) follow at residues 26-46 (LGLM…LIIF), 52-72 (LLFL…ISLI), 82-102 (VFAY…FVMK), 111-131 (SMSL…IMLY), and 134-154 (FFCY…VVKI).

It belongs to the complex I subunit 6 family.

It localises to the mitochondrion membrane. The enzyme catalyses a ubiquinone + NADH + 5 H(+)(in) = a ubiquinol + NAD(+) + 4 H(+)(out). Core subunit of the mitochondrial membrane respiratory chain NADH dehydrogenase (Complex I) that is believed to belong to the minimal assembly required for catalysis. Complex I functions in the transfer of electrons from NADH to the respiratory chain. The immediate electron acceptor for the enzyme is believed to be ubiquinone. This chain is NADH-ubiquinone oxidoreductase chain 6 (ND6), found in Heterololigo bleekeri (Spear squid).